The following is a 508-amino-acid chain: Photosystem II CP47 reaction center protein (508 aa).

A run of 6 helical transmembrane segments spans residues 21–36 (SVHI…WAGS), 101–115 (IVFS…IWHW), 140–156 (GIHL…FGAF), 203–218 (IAAG…FHLS), 237–252 (VLSS…AFVV), and 457–472 (SFAL…HGAR).

Belongs to the PsbB/PsbC family. PsbB subfamily. PSII is composed of 1 copy each of membrane proteins PsbA, PsbB, PsbC, PsbD, PsbE, PsbF, PsbH, PsbI, PsbJ, PsbK, PsbL, PsbM, PsbT, PsbX, PsbY, PsbZ, Psb30/Ycf12, at least 3 peripheral proteins of the oxygen-evolving complex and a large number of cofactors. It forms dimeric complexes. Binds multiple chlorophylls. PSII binds additional chlorophylls, carotenoids and specific lipids. is required as a cofactor.

It localises to the plastid. Its subcellular location is the chloroplast thylakoid membrane. Functionally, one of the components of the core complex of photosystem II (PSII). It binds chlorophyll and helps catalyze the primary light-induced photochemical processes of PSII. PSII is a light-driven water:plastoquinone oxidoreductase, using light energy to abstract electrons from H(2)O, generating O(2) and a proton gradient subsequently used for ATP formation. The protein is Photosystem II CP47 reaction center protein of Nymphaea alba (White water-lily).